The primary structure comprises 229 residues: Peptidyl-tRNA hydrolase (229 aa).

Y17 contributes to the tRNA binding site. The active-site Proton acceptor is the H22. 3 residues coordinate tRNA: F74, N76, and N122. The interval 194–229 is disordered; the sequence is AGKTTRPRKPVRQTANAEASNNSPEASATPQNKDNT. The span at 207–223 shows a compositional bias: low complexity; the sequence is TANAEASNNSPEASATP.

The protein belongs to the PTH family. Monomer.

The protein resides in the cytoplasm. The enzyme catalyses an N-acyl-L-alpha-aminoacyl-tRNA + H2O = an N-acyl-L-amino acid + a tRNA + H(+). Its function is as follows. Hydrolyzes ribosome-free peptidyl-tRNAs (with 1 or more amino acids incorporated), which drop off the ribosome during protein synthesis, or as a result of ribosome stalling. In terms of biological role, catalyzes the release of premature peptidyl moieties from peptidyl-tRNA molecules trapped in stalled 50S ribosomal subunits, and thus maintains levels of free tRNAs and 50S ribosomes. This is Peptidyl-tRNA hydrolase from Desulfovibrio desulfuricans (strain ATCC 27774 / DSM 6949 / MB).